We begin with the raw amino-acid sequence, 274 residues long: Large ribosomal subunit protein uL2cz/uL2cy (274 aa).

Disordered stretches follow at residues 1-23 (MAIHLYKTSTPSTRNRAVDSQVK) and 224-274 (NPVD…RRSK).

Belongs to the universal ribosomal protein uL2 family. As to quaternary structure, part of the 50S ribosomal subunit.

The protein localises to the plastid. The protein resides in the chloroplast. This Vitis vinifera (Grape) protein is Large ribosomal subunit protein uL2cz/uL2cy (rpl2-A).